The chain runs to 135 residues: Probable transporter PD_1892 (135 aa).

4 helical membrane-spanning segments follow: residues 4–24 (YWYP…LLLL), 45–65 (AQNI…TVIF), 71–91 (VTVA…GLGT), and 114–134 (IVAT…MGVY).

Belongs to the TsuA/YedE (TC 9.B.102) family.

The protein localises to the cell inner membrane. This Xylella fastidiosa (strain Temecula1 / ATCC 700964) protein is Probable transporter PD_1892.